The chain runs to 422 residues: Mannosylglycerate synthase (422 aa).

GDP-alpha-D-mannose contacts are provided by residues 7 to 11, Q66, K77, D101, and 101 to 102; these read PFKEE and DS. (R)-glycerate-binding positions include R132 and 137 to 140; that span reads AMIT. Residues L164, D193, and Y221 each contribute to the GDP-alpha-D-mannose site.

Belongs to the glycosyltransferase 78 family.

The catalysed reaction is (R)-glycerate + GDP-alpha-D-mannose = (2R)-2-O-(alpha-D-mannosyl)-glycerate + GDP + H(+). It catalyses the reaction GDP-alpha-D-glucose + (R)-glycerate = (2R)-2-O-(alpha-D-glucopyranosyl)-glycerate + GDP + H(+). With respect to regulation, activity is not dependent on divalent cations, but it is enhanced by Mg(2+). Involved in the biosynthesis of the compatible solute alpha-D-mannosyl-glycerate (MG). Catalyzes the condensation of GDP-alpha-D-mannose (GDP-Man) with D-glycerate to produce alpha-D-mannosyl-glycerate. Can also use GDP-alpha-D-glucose (GDP-Glc) as sugar donor to produce alpha-D-glucopyranosyl-glycerate (GG). The sequence is that of Mannosylglycerate synthase from Selaginella moellendorffii (Spikemoss).